A 343-amino-acid chain; its full sequence is Protein RecA (343 aa).

68–75 (GPESGGKT) contacts ATP.

Belongs to the RecA family.

Its subcellular location is the cytoplasm. Its function is as follows. Can catalyze the hydrolysis of ATP in the presence of single-stranded DNA, the ATP-dependent uptake of single-stranded DNA by duplex DNA, and the ATP-dependent hybridization of homologous single-stranded DNAs. It interacts with LexA causing its activation and leading to its autocatalytic cleavage. In Syntrophus aciditrophicus (strain SB), this protein is Protein RecA.